Reading from the N-terminus, the 91-residue chain is Small ribosomal subunit protein uS15c (91 aa).

Belongs to the universal ribosomal protein uS15 family. In terms of assembly, part of the 30S ribosomal subunit.

It localises to the plastid. It is found in the chloroplast. This chain is Small ribosomal subunit protein uS15c (rps15), found in Eucalyptus globulus subsp. globulus (Tasmanian blue gum).